Consider the following 208-residue polypeptide: Large ribosomal subunit protein eL13 (208 aa).

Belongs to the eukaryotic ribosomal protein eL13 family.

The protein is Large ribosomal subunit protein eL13 (RPL13) of Chlamydomonas sp. (strain W80).